A 2220-amino-acid polypeptide reads, in one-letter code: Non-reducing polyketide synthase stbA (2220 aa).

The tract at residues 10–255 is N-terminal acylcarrier protein transacylase domain (SAT); the sequence is IFSPQNSPPK…HDATNTDMAQ (246 aa). One can recognise a Ketosynthase family 3 (KS3) domain in the interval 379 to 803; that stretch reads SDAIAVVGAG…GSNSALICSE (425 aa). Active-site for beta-ketoacyl synthase activity residues include cysteine 551, histidine 687, and histidine 726. The tract at residues 906–1207 is malonyl-CoA:ACP transacylase (MAT) domain; that stretch reads LAFSGQSRTN…ADATQHTFQA (302 aa). The active-site For acyl/malonyl transferase activity is the serine 993. Residues 1287-1414 are N-terminal hotdog fold; it reads EPRAAQLVRY…GDFTMTAGPH (128 aa). In terms of domain architecture, PKS/mFAS DH spans 1287–1589; the sequence is EPRAAQLVRY…FHKTSMTKLL (303 aa). The product template (PT) domain stretch occupies residues 1292 to 1588; the sequence is QLVRYKGALG…HFHKTSMTKL (297 aa). The Proton acceptor; for dehydratase activity role is filled by histidine 1323. The C-terminal hotdog fold stretch occupies residues 1436–1589; sequence DAEKLRKRTA…FHKTSMTKLL (154 aa). The Proton donor; for dehydratase activity role is filled by aspartate 1500. Carrier domains are found at residues 1634–1711 and 1742–1821; these read AAGP…SGGA and PAGP…AADV. Residues serine 1671 and serine 1779 each carry the O-(pantetheine 4'-phosphoryl)serine modification. The tract at residues 1879–2210 is thioesterase (TE) domain; that stretch reads TRFRMETVVY…YDFIFTELEN (332 aa). Residues serine 1999 and aspartate 2148 each act as for thioesterase activity in the active site.

The catalysed reaction is 3 malonyl-CoA + acetyl-CoA + 2 H(+) = orsellinate + 3 CO2 + 4 CoA. It functions in the pathway secondary metabolite biosynthesis; terpenoid biosynthesis. Non-reducing polyketide synthase; part of the cluster that mediates the biosynthesis of LL-Z1272-beta, also known as ilicicolin B, a prenylated aryl-aldehyde produced by several fungi and that serves as a key pathway intermediate for many fungal meroterpenoids. The first step in the pathway is performed by the non-reducing polyketide synthase stbA that produces orsellinic acid by condensing acetyl-CoA with 3 malonyl-CoA units. The prenyltransferase stbC then prenylates orsenilic acid into grifolic acid. Finally, grifolic acid is reduced to ilicicolin B by the NRPS-like protein stbB. The protein is Non-reducing polyketide synthase stbA of Stachybotrys bisbyi (Hyalostachybotrys bisbyi).